Here is a 1113-residue protein sequence, read N- to C-terminus: Tudor domain-containing protein 7 (1113 aa).

HTH OST-type domains lie at 3 to 76 (EADL…YAVA) and 249 to 318 (KMDE…YPAK). The span at 320 to 334 (EQPLRSDQDPEKERP) shows a compositional bias: basic and acidic residues. Residues 320 to 352 (EQPLRSDQDPEKERPPPPPAPRQEVPSKGSPAV) form a disordered region. The 70-residue stretch at 352–421 (VMPDVKEKVA…TQKAILYAKL (70 aa)) folds into the HTH OST-type 3 domain. Tudor domains are found at residues 528-585 (TVHV…FCSL) and 718-775 (LPFC…FLQE). Positions 873-895 (SSPGNRNASTPAPGSPAESLRKS) are disordered. Ser-874 is subject to Phosphoserine. Residues 875–884 (PGNRNASTPA) are compositionally biased toward polar residues. Residues 876-1113 (GNRNASTPAP…QYLVELSKAN (238 aa)) form an interaction with CDK17 region. Residues 908-1113 (TSSFSLEELP…QYLVELSKAN (206 aa)) are interaction with CABLES1.

It belongs to the TDRD7 family. In terms of assembly, found in a mRNP complex, at least composed of TDRD1, TDRD6, TDRD7 and DDX4. Found in a complex containing CABLES1, CDK16 and CDK17. Interacts with CABLES1, CDK17 and PIWIL1. In terms of tissue distribution, expressed in brain and testis.

The protein resides in the cytoplasm. Component of specific cytoplasmic RNA granules involved in post-transcriptional regulation of specific genes: probably acts by binding to specific mRNAs and regulating their translation. Required for lens transparency during lens development, by regulating translation of genes such as CRYBB3 and HSPB1 in the developing lens. Also required during spermatogenesis. The polypeptide is Tudor domain-containing protein 7 (Tdrd7) (Rattus norvegicus (Rat)).